The chain runs to 670 residues: MLPSKVVHRKAVRTVPLLLAALIFAGCTGQAPHTPPANVQGAADGTSDYYLQQVQQSADDNKVDWQLLAIRALLNEGKLPQAGDALTQLPADLNNIQRQERLLLLARLNVARQNLSGATDPLKQIDISALSQQQQVRYYQLQIAVGQGQPSLDVVRAWVALEPLQTSPADKQKNIDETWQALLQIPQQQINTLTINANENVLQGWLDLLGVYKNNVTAPDMLKSAIQDWQTRYPYNPAAKMLPTSLTQAQNLHPASMGKIALLLPLSGQAQVFANAIQKGFNDAKNGVLAQSTVAPSPAGPVQVPAATPGDAAVAVSPSATTSDKAVAEQPAPAINVTTAAPSASTQIQVYDTSSQPVEQLLTQAQNDGATLAIGPLLKSDVDKMLNSQTALNVLALNEPESVQNRPNICYFALSPEDEARDAAHHMWEQGKRAPLLLVPRTSLGDRVNKAFAAEWQKLGGATVLQQQFGSTAELKQGINSGAGIRLSGTPVNVQPQQQAGVTIAGLTIPAPPTDAQPGATSSNGRVDSVYIVATQDEMILIKPMIAMRISSRDNVGLYASSRSYQAGAGPDYRLELEGLQFSDAPLLSGANPALMQQAAKAFNNDYSLVRLYAMGVDAWTLANHFNEMRNQPGFQIKGDTGMLSANQDCIINRKLVWSQYHQGQIVPGT.

A signal peptide spans 1–26 (MLPSKVVHRKAVRTVPLLLAALIFAG). Cysteine 27 carries N-palmitoyl cysteine lipidation. The S-diacylglycerol cysteine moiety is linked to residue cysteine 27.

The protein belongs to the LpoA family. In terms of assembly, interacts with PBP1a.

It localises to the cell outer membrane. Its function is as follows. Regulator of peptidoglycan synthesis that is essential for the function of penicillin-binding protein 1A (PBP1a). The polypeptide is Penicillin-binding protein activator LpoA (Erwinia tasmaniensis (strain DSM 17950 / CFBP 7177 / CIP 109463 / NCPPB 4357 / Et1/99)).